A 257-amino-acid polypeptide reads, in one-letter code: tRNA pseudouridine synthase A (257 aa).

Residue Asp52 is the Nucleophile of the active site. Tyr111 contacts substrate.

Belongs to the tRNA pseudouridine synthase TruA family. In terms of assembly, homodimer.

The catalysed reaction is uridine(38/39/40) in tRNA = pseudouridine(38/39/40) in tRNA. Its function is as follows. Formation of pseudouridine at positions 38, 39 and 40 in the anticodon stem and loop of transfer RNAs. The polypeptide is tRNA pseudouridine synthase A (Cereibacter sphaeroides (strain ATCC 17025 / ATH 2.4.3) (Rhodobacter sphaeroides)).